A 278-amino-acid chain; its full sequence is Orotidine 5'-phosphate decarboxylase (278 aa).

Residues Asp40, 62–64 (KTH), 93–102 (DRKFIDIGNT), Tyr228, and Arg246 each bind substrate. Lys95 functions as the Proton donor in the catalytic mechanism.

The protein belongs to the OMP decarboxylase family.

The catalysed reaction is orotidine 5'-phosphate + H(+) = UMP + CO2. It participates in pyrimidine metabolism; UMP biosynthesis via de novo pathway; UMP from orotate: step 2/2. This is Orotidine 5'-phosphate decarboxylase (PYR1) from Passalora fulva (Tomato leaf mold).